We begin with the raw amino-acid sequence, 288 residues long: Store-operated calcium entry regulator STIMATE (288 aa).

Topologically, residues 1-28 (MQGPGGNVSRGLPGGPASTVASGAGRCE) are cytoplasmic. Transmembrane regions (helical) follow at residues 29-49 (SGAL…VVAF), 69-89 (IWFL…FANV), and 102-122 (LYLI…YVGV). Residues 149 to 153 (GAWVG) carry the GXXXG motif motif. The next 2 membrane-spanning stretches (helical) occupy residues 156–176 (ALYI…LLIL) and 194–214 (LAIV…WVVD). The Cytoplasmic segment spans residues 215–288 (NFLMRKGKTK…KKKHRFGLPV (74 aa)). The tract at residues 228–288 (EERGANQDSR…KKKHRFGLPV (61 aa)) is disordered. The tract at residues 241-246 (KVRYRR) is required for localization in the endoplasmic reticulum. Acidic residues predominate over residues 261-272 (ADDEMEESDAEE). The segment covering 277 to 288 (PVKKKHRFGLPV) has biased composition (basic residues).

This sequence belongs to the STIMATE family. Homooligomer. Interacts with STIM1.

The protein localises to the endoplasmic reticulum membrane. Acts as a regulator of store-operated Ca(2+) entry (SOCE) at junctional sites that connect the endoplasmic reticulum (ER) and plasma membrane (PM), called ER-plasma membrane (ER-PM) junction or cortical ER. SOCE is a Ca(2+) influx following depletion of intracellular Ca(2+) stores. Acts by interacting with STIM1, promoting STIM1 conformational switch. Involved in STIM1 relocalization to ER-PM junctions. Contributes to the maintenance and reorganization of store-dependent ER-PM junctions. This chain is Store-operated calcium entry regulator STIMATE, found in Rattus norvegicus (Rat).